A 151-amino-acid polypeptide reads, in one-letter code: Phosphoribosyl-AMP cyclohydrolase (151 aa).

Asp94 contributes to the Mg(2+) binding site. Cys95 provides a ligand contact to Zn(2+). Residues Asp96 and Asp98 each contribute to the Mg(2+) site. Positions 112 and 119 each coordinate Zn(2+).

It belongs to the PRA-CH family. In terms of assembly, homodimer. It depends on Mg(2+) as a cofactor. Zn(2+) serves as cofactor.

The protein localises to the cytoplasm. The catalysed reaction is 1-(5-phospho-beta-D-ribosyl)-5'-AMP + H2O = 1-(5-phospho-beta-D-ribosyl)-5-[(5-phospho-beta-D-ribosylamino)methylideneamino]imidazole-4-carboxamide. It functions in the pathway amino-acid biosynthesis; L-histidine biosynthesis; L-histidine from 5-phospho-alpha-D-ribose 1-diphosphate: step 3/9. Catalyzes the hydrolysis of the adenine ring of phosphoribosyl-AMP. In Rhodopseudomonas palustris (strain ATCC BAA-98 / CGA009), this protein is Phosphoribosyl-AMP cyclohydrolase.